The following is a 292-amino-acid chain: N-acetylneuraminate lyase (292 aa).

S47 and T48 together coordinate aceneuramate. The Proton donor role is filled by Y136. K164 serves as the catalytic Schiff-base intermediate with substrate. Aceneuramate contacts are provided by T166, G188, D190, E191, and S207.

This sequence belongs to the DapA family. NanA subfamily. As to quaternary structure, homotetramer.

It localises to the cytoplasm. The enzyme catalyses aceneuramate = aldehydo-N-acetyl-D-mannosamine + pyruvate. It functions in the pathway amino-sugar metabolism; N-acetylneuraminate degradation; D-fructose 6-phosphate from N-acetylneuraminate: step 1/5. Functionally, catalyzes the reversible aldol cleavage of N-acetylneuraminic acid (sialic acid; Neu5Ac) to form pyruvate and N-acetylmannosamine (ManNAc) via a Schiff base intermediate. In Histophilus somni (strain 129Pt) (Haemophilus somnus), this protein is N-acetylneuraminate lyase.